We begin with the raw amino-acid sequence, 341 residues long: GTPase Obg (341 aa).

Residues Met-1–Ile-159 form the Obg domain. The region spanning Ala-160–Glu-327 is the OBG-type G domain. GTP is bound by residues Gly-166–Ser-173, Phe-191–His-195, Asp-212–Gly-215, Ser-279–Asp-282, and Ser-308–Val-310. Mg(2+)-binding residues include Ser-173 and Thr-193.

It belongs to the TRAFAC class OBG-HflX-like GTPase superfamily. OBG GTPase family. In terms of assembly, monomer. The cofactor is Mg(2+).

The protein localises to the cytoplasm. Its function is as follows. An essential GTPase which binds GTP, GDP and possibly (p)ppGpp with moderate affinity, with high nucleotide exchange rates and a fairly low GTP hydrolysis rate. Plays a role in control of the cell cycle, stress response, ribosome biogenesis and in those bacteria that undergo differentiation, in morphogenesis control. The sequence is that of GTPase Obg from Bartonella tribocorum (strain CIP 105476 / IBS 506).